Here is an 83-residue protein sequence, read N- to C-terminus: Large ribosomal subunit protein bL31 (83 aa).

It belongs to the bacterial ribosomal protein bL31 family. Type A subfamily. Part of the 50S ribosomal subunit.

Binds the 23S rRNA. The polypeptide is Large ribosomal subunit protein bL31 (Gloeothece citriformis (strain PCC 7424) (Cyanothece sp. (strain PCC 7424))).